A 142-amino-acid chain; its full sequence is Large ribosomal subunit protein uL13 (142 aa).

This sequence belongs to the universal ribosomal protein uL13 family. Part of the 50S ribosomal subunit.

This protein is one of the early assembly proteins of the 50S ribosomal subunit, although it is not seen to bind rRNA by itself. It is important during the early stages of 50S assembly. The chain is Large ribosomal subunit protein uL13 from Alkaliphilus metalliredigens (strain QYMF).